A 275-amino-acid chain; its full sequence is Cytochrome c oxidase subunit 3 (275 aa).

7 helical membrane-spanning segments follow: residues P22–F42, S52–F72, G96–F116, P132–L152, A173–I193, F211–V231, and I253–W273.

It belongs to the cytochrome c oxidase subunit 3 family. Component of the cytochrome c oxidase (complex IV, CIV), a multisubunit enzyme composed of a catalytic core of 3 subunits and several supernumerary subunits. The complex exists as a monomer or a dimer and forms supercomplexes (SCs) in the inner mitochondrial membrane with ubiquinol-cytochrome c oxidoreductase (cytochrome b-c1 complex, complex III, CIII).

The protein resides in the mitochondrion inner membrane. It catalyses the reaction 4 Fe(II)-[cytochrome c] + O2 + 8 H(+)(in) = 4 Fe(III)-[cytochrome c] + 2 H2O + 4 H(+)(out). In terms of biological role, component of the cytochrome c oxidase, the last enzyme in the mitochondrial electron transport chain which drives oxidative phosphorylation. The respiratory chain contains 3 multisubunit complexes succinate dehydrogenase (complex II, CII), ubiquinol-cytochrome c oxidoreductase (cytochrome b-c1 complex, complex III, CIII) and cytochrome c oxidase (complex IV, CIV), that cooperate to transfer electrons derived from NADH and succinate to molecular oxygen, creating an electrochemical gradient over the inner membrane that drives transmembrane transport and the ATP synthase. Cytochrome c oxidase is the component of the respiratory chain that catalyzes the reduction of oxygen to water. Electrons originating from reduced cytochrome c in the intermembrane space (IMS) are transferred via the dinuclear copper A center (CU(A)) of subunit 2 and heme A of subunit 1 to the active site in subunit 1, a binuclear center (BNC) formed by heme A3 and copper B (CU(B)). The BNC reduces molecular oxygen to 2 water molecules using 4 electrons from cytochrome c in the IMS and 4 protons from the mitochondrial matrix. The chain is Cytochrome c oxidase subunit 3 (COX3) from Mycosarcoma maydis (Corn smut fungus).